The chain runs to 617 residues: Probable potassium transport system protein Kup 3 (617 aa).

11 consecutive transmembrane segments (helical) span residues 42–62 (VASL…ALLI), 95–115 (LVVG…TPAI), 129–149 (PSLA…LFMM), 160–180 (IFGP…IHGI), 206–226 (VSFA…AMYA), 240–260 (WFAI…ALLI), 282–302 (LVAF…SGVF), 330–350 (IYVP…VLSF), 360–380 (YGIA…LVAI), 386–406 (PWLV…FFSA), and 411–431 (LFEG…MMLT).

Belongs to the HAK/KUP transporter (TC 2.A.72) family.

It is found in the cell inner membrane. It catalyses the reaction K(+)(in) + H(+)(in) = K(+)(out) + H(+)(out). Its function is as follows. Transport of potassium into the cell. Likely operates as a K(+):H(+) symporter. This chain is Probable potassium transport system protein Kup 3, found in Bradyrhizobium diazoefficiens (strain JCM 10833 / BCRC 13528 / IAM 13628 / NBRC 14792 / USDA 110).